Here is a 175-residue protein sequence, read N- to C-terminus: Bifunctional protein PyrR (175 aa).

Substrate contacts are provided by residues 40–41, Arg85, 102–110, Arg135, and Val159; these read TR and DDVLYTGRT. The short motif at 98-110 is the PRPP-binding element; the sequence is VIIIDDVLYTGRT.

The protein belongs to the purine/pyrimidine phosphoribosyltransferase family. PyrR subfamily. As to quaternary structure, homodimer and homohexamer; in equilibrium.

It carries out the reaction UMP + diphosphate = 5-phospho-alpha-D-ribose 1-diphosphate + uracil. Its function is as follows. Regulates transcriptional attenuation of the pyrimidine nucleotide (pyr) operon by binding in a uridine-dependent manner to specific sites on pyr mRNA. This disrupts an antiterminator hairpin in the RNA and favors formation of a downstream transcription terminator, leading to a reduced expression of downstream genes. Also displays a weak uracil phosphoribosyltransferase activity which is not physiologically significant. This Staphylococcus saprophyticus subsp. saprophyticus (strain ATCC 15305 / DSM 20229 / NCIMB 8711 / NCTC 7292 / S-41) protein is Bifunctional protein PyrR.